A 485-amino-acid chain; its full sequence is UDP-N-acetylmuramate--L-alanine ligase (485 aa).

Glycine 120–threonine 126 contributes to the ATP binding site.

Belongs to the MurCDEF family.

It localises to the cytoplasm. It catalyses the reaction UDP-N-acetyl-alpha-D-muramate + L-alanine + ATP = UDP-N-acetyl-alpha-D-muramoyl-L-alanine + ADP + phosphate + H(+). It functions in the pathway cell wall biogenesis; peptidoglycan biosynthesis. Cell wall formation. The sequence is that of UDP-N-acetylmuramate--L-alanine ligase from Rickettsia africae (strain ESF-5).